The sequence spans 171 residues: Mitochondrial import inner membrane translocase subunit Tim17-A (171 aa).

Cysteine 9 and cysteine 78 are oxidised to a cystine. 3 consecutive transmembrane segments (helical) span residues 17 to 37, 63 to 77, and 113 to 133; these read CGGA…FKGF, GGSF…STID, and VGSA…GILL. The disordered stretch occupies residues 147–171; the sequence is FAEDHSQLPSSQLPSSPFGDYRQYQ. Residues 153 to 163 show a composition bias toward low complexity; the sequence is QLPSSQLPSSP.

The protein belongs to the Tim17/Tim22/Tim23 family. Component of the TIM23 complex at least composed of TIMM23, TIMM17 (TIMM17A or TIMM17B) and TIMM50. The complex interacts with the TIMM44 component of the PAM complex and with DNAJC15. In terms of processing, degraded by YMEL1 downstream of the integrated stress response (ISR).

The protein localises to the mitochondrion inner membrane. Essential component of the TIM23 complex, a complex that mediates the translocation of transit peptide-containing proteins across the mitochondrial inner membrane. In Rattus norvegicus (Rat), this protein is Mitochondrial import inner membrane translocase subunit Tim17-A (Timm17a).